We begin with the raw amino-acid sequence, 142 residues long: NTF2-related export protein 2 (142 aa).

An NTF2 domain is found at 17-136; sequence AAEEFVNIYY…WKIASDCFRF (120 aa).

Associates with NXF1, NXF2, NXF3 and NXF5.

The protein resides in the nucleus. The protein localises to the cytoplasm. In terms of biological role, regulator of protein export for NES-containing proteins. Also plays a role in mRNA nuclear export. The protein is NTF2-related export protein 2 (NXT2) of Bos taurus (Bovine).